A 329-amino-acid polypeptide reads, in one-letter code: MTAANQETILELRDVKKYFPIRSGLFQRKVGDVKAVDGVSFSLKKGETLGIVGESGCGKSTAGRTMIRLYKPTEGQILFKGQDISNLSEEKLRKSVRKNIQMVFQDPFASLNPRKTLRSIIKEPFNTHNMYTMRERNEKVEELLARVGLHPSFAGRYPHEFSGGQRQRIGIARALTLNPELIIADEPVSALDVSIQAQVINLMEELQEEFNLTYLFISHDLSVVRHISDRVGVMYLGKMMELTGKHELYDNPLHPYTQALLSSVPVTRKRGSVKRERIVLKGELPSPANPPKGCVFHTRCPVAKPICKEQIPEFKEAAPSHFVACHLYS.

An ABC transporter domain is found at 10 to 261; it reads LELRDVKKYF…PLHPYTQALL (252 aa). Position 53–60 (53–60) interacts with ATP; the sequence is GESGCGKS.

Belongs to the ABC transporter superfamily.

It localises to the cell membrane. This protein is a component of an oligopeptide permease, a binding protein-dependent transport system. This APP system can completely substitute for the OPP system in both sporulation and genetic competence, though, unlike OPP, is incapable of transporting tripeptides. Probably responsible for energy coupling to the transport system. The polypeptide is Oligopeptide transport ATP-binding protein AppF (appF) (Bacillus subtilis (strain 168)).